The primary structure comprises 154 residues: Large ribosomal subunit protein uL15 (154 aa).

Residues 1–61 (MDLSTLKPVA…GGQMPLMRRM (61 aa)) form a disordered region.

The protein belongs to the universal ribosomal protein uL15 family. Part of the 50S ribosomal subunit.

In terms of biological role, binds to the 23S rRNA. The protein is Large ribosomal subunit protein uL15 of Oenococcus oeni (strain ATCC BAA-331 / PSU-1).